The sequence spans 329 residues: uncharacterized protein (329 aa).

Transmembrane regions (helical) follow at residues 9–29 (LMGLLIVLLAAIFFCFHNVIV), 53–73 (SHSFLLLLLRMLWVVPLMALI), 105–125 (FLMFLYLVLLYISISFIPTGI), 126–146 (AITLFFTYPIFTALLAWRLFN), 154–174 (WLVIGLTLIGTFLTIPYAYGG), 179–199 (LVLGVSTGIASGIVYAGYTVF), 210–230 (VPFTWISFATTLILSILCLII), 240–260 (WLAITIGSLLSALFTLAGHVL), 273–293 (AAIIGATNPALTVVLAGLAIQ), and 296–316 (LTNIQIFGVCLVTFSIALLNY). 2 EamA domains span residues 103–169 (CGFL…LTIP) and 191–316 (IVYA…LLNY).

It belongs to the EamA transporter family.

The protein localises to the cell membrane. This is an uncharacterized protein from Synechocystis sp. (strain ATCC 27184 / PCC 6803 / Kazusa).